We begin with the raw amino-acid sequence, 306 residues long: Methionyl-tRNA formyltransferase (306 aa).

A (6S)-5,6,7,8-tetrahydrofolate-binding site is contributed by 109 to 112 (SILP).

It belongs to the Fmt family.

It carries out the reaction L-methionyl-tRNA(fMet) + (6R)-10-formyltetrahydrofolate = N-formyl-L-methionyl-tRNA(fMet) + (6S)-5,6,7,8-tetrahydrofolate + H(+). Attaches a formyl group to the free amino group of methionyl-tRNA(fMet). The formyl group appears to play a dual role in the initiator identity of N-formylmethionyl-tRNA by promoting its recognition by IF2 and preventing the misappropriation of this tRNA by the elongation apparatus. This Sphingopyxis alaskensis (strain DSM 13593 / LMG 18877 / RB2256) (Sphingomonas alaskensis) protein is Methionyl-tRNA formyltransferase.